We begin with the raw amino-acid sequence, 407 residues long: S-adenosylmethionine synthase (407 aa).

ATP is bound at residue His-15. Residue Asp-17 coordinates Mg(2+). Glu-43 contributes to the K(+) binding site. Residues Glu-56 and Gln-100 each contribute to the L-methionine site. A flexible loop region spans residues 100–110 (QSPDIAQGVDE). ATP-binding positions include 171–173 (DGK), 248–249 (KF), Asp-257, 263–264 (RK), Ala-280, and Lys-284. Asp-257 is an L-methionine binding site. Lys-288 is an L-methionine binding site.

Belongs to the AdoMet synthase family. In terms of assembly, homotetramer; dimer of dimers. Mg(2+) serves as cofactor. It depends on K(+) as a cofactor.

It is found in the cytoplasm. The catalysed reaction is L-methionine + ATP + H2O = S-adenosyl-L-methionine + phosphate + diphosphate. The protein operates within amino-acid biosynthesis; S-adenosyl-L-methionine biosynthesis; S-adenosyl-L-methionine from L-methionine: step 1/1. In terms of biological role, catalyzes the formation of S-adenosylmethionine (AdoMet) from methionine and ATP. The overall synthetic reaction is composed of two sequential steps, AdoMet formation and the subsequent tripolyphosphate hydrolysis which occurs prior to release of AdoMet from the enzyme. The chain is S-adenosylmethionine synthase from Synechococcus sp. (strain RCC307).